The following is a 154-amino-acid chain: Large ribosomal subunit protein uL13 (154 aa).

This sequence belongs to the universal ribosomal protein uL13 family. Part of the 50S ribosomal subunit.

Its function is as follows. This protein is one of the early assembly proteins of the 50S ribosomal subunit, although it is not seen to bind rRNA by itself. It is important during the early stages of 50S assembly. The chain is Large ribosomal subunit protein uL13 from Rhizobium etli (strain CIAT 652).